Here is a 64-residue protein sequence, read N- to C-terminus: Large ribosomal subunit protein bL35 (64 aa).

Composition is skewed to basic residues over residues 1-26 (MPKMKTHRGAAKRFKKTGTGKIKRSK) and 33-44 (LTKKSPKRKRKL). The disordered stretch occupies residues 1–44 (MPKMKTHRGAAKRFKKTGTGKIKRSKAYTSHILTKKSPKRKRKL).

The protein belongs to the bacterial ribosomal protein bL35 family.

The sequence is that of Large ribosomal subunit protein bL35 from Alkaliphilus oremlandii (strain OhILAs) (Clostridium oremlandii (strain OhILAs)).